The chain runs to 282 residues: Elongation factor Ts (282 aa).

An involved in Mg(2+) ion dislocation from EF-Tu region spans residues 80–83 (TDFV).

Belongs to the EF-Ts family.

It localises to the cytoplasm. In terms of biological role, associates with the EF-Tu.GDP complex and induces the exchange of GDP to GTP. It remains bound to the aminoacyl-tRNA.EF-Tu.GTP complex up to the GTP hydrolysis stage on the ribosome. This Chlamydia trachomatis serovar A (strain ATCC VR-571B / DSM 19440 / HAR-13) protein is Elongation factor Ts.